A 421-amino-acid chain; its full sequence is D-amino acid dehydrogenase (421 aa).

3-17 (VTILGAGVIGVTSAY) serves as a coordination point for FAD.

It belongs to the DadA oxidoreductase family. It depends on FAD as a cofactor.

The enzyme catalyses a D-alpha-amino acid + A + H2O = a 2-oxocarboxylate + AH2 + NH4(+). Its pathway is amino-acid degradation; D-alanine degradation; NH(3) and pyruvate from D-alanine: step 1/1. Functionally, oxidative deamination of D-amino acids. The sequence is that of D-amino acid dehydrogenase from Allorhizobium ampelinum (strain ATCC BAA-846 / DSM 112012 / S4) (Agrobacterium vitis (strain S4)).